The chain runs to 245 residues: Putative insertion sequence ATP-binding protein y4pL (245 aa).

ATP is bound at residue 106–113 (GPSGVGKS).

Belongs to the IS21/IS1162 putative ATP-binding protein family.

In Sinorhizobium fredii (strain NBRC 101917 / NGR234), this protein is Putative insertion sequence ATP-binding protein y4pL.